The following is a 256-amino-acid chain: UPF0246 protein Maqu_2499 (256 aa).

Belongs to the UPF0246 family.

This is UPF0246 protein Maqu_2499 from Marinobacter nauticus (strain ATCC 700491 / DSM 11845 / VT8) (Marinobacter aquaeolei).